The chain runs to 163 residues: 5-hydroxymethyl-dUMP N-hydrolase (163 aa).

The residue at position 2 (Ala2) is an N-acetylalanine. A 5-hydroxymethyl-dUMP-binding site is contributed by Gly16. Phosphoserine is present on Ser17. Residues Ile18, Arg19, Gly20, Ser87, Gly89, and Glu93 each contribute to the 5-hydroxymethyl-dUMP site. Ser87 bears the Phosphoserine mark. Residues Ser112, Ser117, Ser127, and Ser158 each carry the phosphoserine modification. Ser117 provides a ligand contact to 5-hydroxymethyl-dUMP.

In terms of assembly, monomer and homodimer. In terms of tissue distribution, highly expressed in heart, kidney, liver and spleen. Weakly expressed in lung and skeletal muscle.

It localises to the cytoplasm. It is found in the nucleus. It carries out the reaction 5-hydroxymethyl-dUMP + H2O = 5-hydroxymethyluracil + 2-deoxy-D-ribose 5-phosphate. In terms of biological role, part of a nucleotide salvage pathway that eliminates epigenetically modified 5-hydroxymethyl-dCMP (hmdCMP) in a two-step process entailing deamination to cytotoxic 5-hydroxymethyl-dUMP (hmdUMP), followed by its hydrolysis into 5-hydroxymethyluracil (hmU) and 2-deoxy-D-ribose 5-phosphate (deoxyribosephosphate). Catalyzes the second step in that pathway, the hydrolysis of the N-glycosidic bond in hmdUMP, degrading this cytotoxic nucleotide to avoid its genomic integration. The sequence is that of 5-hydroxymethyl-dUMP N-hydrolase from Rattus norvegicus (Rat).